A 325-amino-acid polypeptide reads, in one-letter code: Probable cell division protein WhiA (325 aa).

Residues 280–313 (SLKELGNMLEKPLGKSGVNHRLRKIDKIAEELRK) constitute a DNA-binding region (H-T-H motif).

Belongs to the WhiA family.

Its function is as follows. Involved in cell division and chromosome segregation. This Caldicellulosiruptor bescii (strain ATCC BAA-1888 / DSM 6725 / KCTC 15123 / Z-1320) (Anaerocellum thermophilum) protein is Probable cell division protein WhiA.